Reading from the N-terminus, the 131-residue chain is Meiotically up-regulated gene 115 protein (131 aa).

Its subcellular location is the mitochondrion. The protein localises to the nucleus. In terms of biological role, has a role in meiosis. The chain is Meiotically up-regulated gene 115 protein (mug115) from Schizosaccharomyces pombe (strain 972 / ATCC 24843) (Fission yeast).